A 259-amino-acid polypeptide reads, in one-letter code: UDP-2,3-diacylglucosamine hydrolase (259 aa).

The Mn(2+) site is built by D8, H10, D41, N79, and H114. Position 79 to 80 (79 to 80 (NR)) interacts with substrate. The substrate site is built by D122, S160, N164, K167, and H195. 2 residues coordinate Mn(2+): H195 and H197.

Belongs to the LpxH family. Mn(2+) is required as a cofactor.

Its subcellular location is the cell inner membrane. The catalysed reaction is UDP-2-N,3-O-bis[(3R)-3-hydroxytetradecanoyl]-alpha-D-glucosamine + H2O = 2-N,3-O-bis[(3R)-3-hydroxytetradecanoyl]-alpha-D-glucosaminyl 1-phosphate + UMP + 2 H(+). Its pathway is glycolipid biosynthesis; lipid IV(A) biosynthesis; lipid IV(A) from (3R)-3-hydroxytetradecanoyl-[acyl-carrier-protein] and UDP-N-acetyl-alpha-D-glucosamine: step 4/6. Its function is as follows. Hydrolyzes the pyrophosphate bond of UDP-2,3-diacylglucosamine to yield 2,3-diacylglucosamine 1-phosphate (lipid X) and UMP by catalyzing the attack of water at the alpha-P atom. Involved in the biosynthesis of lipid A, a phosphorylated glycolipid that anchors the lipopolysaccharide to the outer membrane of the cell. This is UDP-2,3-diacylglucosamine hydrolase from Edwardsiella ictaluri (strain 93-146).